Reading from the N-terminus, the 340-residue chain is Functional amyloid subunit FapC (340 aa).

A signal peptide spans 1–24 (MKATMVLTPLALAMAAVLSVSAYA). The stretch at 67–100 (NNASVSGSIKDASGNVGVNVAAGDNNQQANAAAL) is one FapC_R1 repeat. Residues 101–133 (ASADASFVFGTATASTSVLQSGYGNTLNNYSNP) are linker 1. A FapC_R2 repeat occupies 134–167 (NTASLSNSANNVSGNLGVNVAAGNFNQQKNDLAA). Residues 168-290 (AVSNGQYSTA…AIVGFKTPVT (123 aa)) form a linker 2 region. One copy of the FapC_R3 repeat lies at 291–324 (NNASLSNSLQNVSGNVGVNIAAGGGNQQSNSLSI). The Cys-X-X-Cys motif lies at 328-331 (CSSC).

The protein belongs to the FapB/FapC family. The major component of purified amyloid fibrils. Fibrils are resistant to boiling in 2% (weight/vol) SDS and require &gt;90% (vol/vol) formic acid to dissolve. Interacts with FapA in vitro.

It localises to the fimbrium. It is found in the secreted. Functionally, the major functional amyloid subunit in this bacterium. Upon overexpression of the endogenous six-gene locus (fapA-fapF), cells form large clumps during liquid growth, make large amounts of biofilm and produce amyloid fibrils. This Pseudomonas aeruginosa (strain ATCC 15692 / DSM 22644 / CIP 104116 / JCM 14847 / LMG 12228 / 1C / PRS 101 / PAO1) protein is Functional amyloid subunit FapC.